Here is a 188-residue protein sequence, read N- to C-terminus: Elongation factor P (188 aa).

It belongs to the elongation factor P family.

Its subcellular location is the cytoplasm. The protein operates within protein biosynthesis; polypeptide chain elongation. Involved in peptide bond synthesis. Stimulates efficient translation and peptide-bond synthesis on native or reconstituted 70S ribosomes in vitro. Probably functions indirectly by altering the affinity of the ribosome for aminoacyl-tRNA, thus increasing their reactivity as acceptors for peptidyl transferase. The chain is Elongation factor P from Rhodopseudomonas palustris (strain BisB5).